The primary structure comprises 473 residues: Glutamate--tRNA ligase 2 (473 aa).

The short motif at 11-21 is the 'HIGH' region element; that stretch reads PSPTGYLHIGG. The segment covering 113 to 133 has biased composition (basic and acidic residues); sequence KARAEGRPPRYDGRWRDRDPS. Positions 113–136 are disordered; that stretch reads KARAEGRPPRYDGRWRDRDPSEAP. A 'KMSKS' region motif is present at residues 240 to 244; it reads KLSKR. ATP is bound at residue Lys-243.

This sequence belongs to the class-I aminoacyl-tRNA synthetase family. Glutamate--tRNA ligase type 1 subfamily. As to quaternary structure, monomer.

It localises to the cytoplasm. It catalyses the reaction tRNA(Glu) + L-glutamate + ATP = L-glutamyl-tRNA(Glu) + AMP + diphosphate. Catalyzes the attachment of glutamate to tRNA(Glu) in a two-step reaction: glutamate is first activated by ATP to form Glu-AMP and then transferred to the acceptor end of tRNA(Glu). This Brucella canis (strain ATCC 23365 / NCTC 10854 / RM-666) protein is Glutamate--tRNA ligase 2.